The primary structure comprises 243 residues: uncharacterized protein (243 aa).

2 stretches are compositionally biased toward basic and acidic residues: residues 1-11 and 167-178; these read MSDEGYRELVE and RNRDPPRPSYLR. 2 disordered regions span residues 1–26 and 146–243; these read MSDE…SPDR and ELYQ…CWPF. Low complexity predominate over residues 185-200; it reads STTTARRPRAMTSTPE.

This is an uncharacterized protein from Canis lupus familiaris (Dog).